The chain runs to 1085 residues: Protein CROWDED NUCLEI 3 (1085 aa).

2 coiled-coil regions span residues 51–149 (DEAS…NDLK) and 185–695 (RERA…LDVL). A Glycyl lysine isopeptide (Lys-Gly) (interchain with G-Cter in ubiquitin) cross-link involves residue lysine 318. The short motif at 404–411 (AKREAALE) is the Nuclear localization signal element. Lysine 661 is covalently cross-linked (Glycyl lysine isopeptide (Lys-Gly) (interchain with G-Cter in ubiquitin)). Serine 764, serine 787, serine 825, and serine 843 each carry phosphoserine. 2 disordered regions span residues 801–997 (TVKL…GKAE) and 1020–1077 (NNTG…SIGK). Residues 813 to 825 (SLDRVSGEDHEPS) are compositionally biased toward basic and acidic residues. A compositionally biased stretch (basic residues) spans 854 to 868 (RRGRGRGRGRGKSVR). The segment covering 877 to 897 (VSRDSKPSDGETPRKRQREQT) has biased composition (basic and acidic residues). At serine 910 the chain carries Phosphoserine. The segment covering 932-941 (VSQTPGQTRY) has biased composition (polar residues). Residues 949–995 (VGTEEDKAQASKGATEKQERVNDDIRKVPSPKETRTPPEGENRENGK) show a composition bias toward basic and acidic residues. Residues 1045–1066 (EEDDENISMIEEENEGEEEEET) show a composition bias toward acidic residues.

It belongs to the CRWN family. Core component of the LINC complex which is composed of inner nuclear membrane SUN domain-containing proteins coupled to outer nuclear membrane WIP proteins, the nucleoskeletal CRWN/LINC proteins, and, possibly, KAKU4. Expressed at low levels in roots, leaves, flowers and flower stalks.

Its subcellular location is the nucleus membrane. It localises to the nucleus. The protein resides in the nucleoplasm. It is found in the cytoplasm. The protein localises to the nucleus lamina. Component of SUN-protein-containing multivariate complexes also called LINC complexes which link the nucleoskeleton and cytoskeleton by providing versatile outer nuclear membrane attachment sites for cytoskeletal filaments. Required for nucleus structure organization (e.g. size and shape). In Arabidopsis thaliana (Mouse-ear cress), this protein is Protein CROWDED NUCLEI 3.